We begin with the raw amino-acid sequence, 523 residues long: UDP-glucuronosyltransferase 2B16 (523 aa).

An N-terminal signal peptide occupies residues 1–16; that stretch reads LLLLLQLSCCFSSGSC. Residue Lys-129 is modified to N6-succinyllysine. N-linked (GlcNAc...) asparagine glycosylation occurs at Asn-309. A helical transmembrane segment spans residues 487-503; sequence VIGFLLACLTITTYLVI.

It belongs to the UDP-glycosyltransferase family.

The protein localises to the microsome membrane. It localises to the endoplasmic reticulum membrane. The enzyme catalyses glucuronate acceptor + UDP-alpha-D-glucuronate = acceptor beta-D-glucuronoside + UDP + H(+). UDPGT is of major importance in the conjugation and subsequent elimination of potentially toxic xenobiotics and endogenous compounds. Acts on small phenolic agents such as 2-beta-naphthol and 4-methylumbelliferone as well as bulky phenolic compounds like 2-hydroxy- and 4-hydroxybiphenyl. In contrast to 2B13 it is active toward 4-hydroxyesterone. This chain is UDP-glucuronosyltransferase 2B16 (UGT2B16), found in Oryctolagus cuniculus (Rabbit).